The following is a 91-amino-acid chain: Small ribosomal subunit protein uS19m (91 aa).

The protein belongs to the universal ribosomal protein uS19 family. Component of the mitochondrial small ribosomal subunit (mt-SSU). Mature N.crassa 74S mitochondrial ribosomes consist of a small (37S) and a large (54S) subunit. The 37S small subunit contains a 16S ribosomal RNA (16S mt-rRNA) and 32 different proteins. The 54S large subunit contains a 23S rRNA (23S mt-rRNA) and 42 different proteins.

It localises to the mitochondrion. Its function is as follows. Component of the mitochondrial ribosome (mitoribosome), a dedicated translation machinery responsible for the synthesis of mitochondrial genome-encoded proteins, including at least some of the essential transmembrane subunits of the mitochondrial respiratory chain. The mitoribosomes are attached to the mitochondrial inner membrane and translation products are cotranslationally integrated into the membrane. The polypeptide is Small ribosomal subunit protein uS19m (rsm19) (Neurospora crassa (strain ATCC 24698 / 74-OR23-1A / CBS 708.71 / DSM 1257 / FGSC 987)).